Reading from the N-terminus, the 241-residue chain is Probable transcriptional regulatory protein azo0574 (241 aa).

A disordered region spans residues 1–21; sequence MAGHSKWANIQHRKGRQDAKR.

The protein belongs to the TACO1 family.

Its subcellular location is the cytoplasm. This Azoarcus sp. (strain BH72) protein is Probable transcriptional regulatory protein azo0574.